Reading from the N-terminus, the 583-residue chain is 5-aminolevulinate synthase, erythroid-specific, mitochondrial (583 aa).

Position 158 (Arg-158) interacts with succinyl-CoA. The pyridoxal 5'-phosphate site is built by Cys-253 and Phe-254. Residues Ser-275 and Arg-294 each coordinate succinyl-CoA. Ser-327, His-355, and Thr-383 together coordinate pyridoxal 5'-phosphate. Lys-386 is an active-site residue. The residue at position 386 (Lys-386) is an N6-(pyridoxal phosphate)lysine. Positions 415 and 416 each coordinate pyridoxal 5'-phosphate. Position 503 (Thr-503) interacts with succinyl-CoA.

It belongs to the class-II pyridoxal-phosphate-dependent aminotransferase family. As to quaternary structure, homodimer. Pyridoxal 5'-phosphate is required as a cofactor.

It is found in the mitochondrion inner membrane. The enzyme catalyses succinyl-CoA + glycine + H(+) = 5-aminolevulinate + CO2 + CoA. The protein operates within porphyrin-containing compound metabolism; protoporphyrin-IX biosynthesis; 5-aminolevulinate from glycine: step 1/1. Catalyzes the pyridoxal 5'-phosphate (PLP)-dependent condensation of succinyl-CoA and glycine to form aminolevulinic acid (ALA), with CoA and CO2 as by-products. Contributes significantly to heme formation during erythropoiesis. The chain is 5-aminolevulinate synthase, erythroid-specific, mitochondrial (alas2) from Danio rerio (Zebrafish).